Here is a 419-residue protein sequence, read N- to C-terminus: Histone acetyltransferase type B catalytic subunit (419 aa).

N-acetylalanine is present on alanine 2. 2 positions are modified to N6-acetyllysine: lysine 9 and lysine 15. The tract at residues 62–64 (DDE) is interaction with histone H4 N-terminus. Phosphoserine; by AMPK is present on serine 190. An interaction with histone H4 N-terminus region spans residues 225–227 (YNY). Residues 241–243 (MLI) and 248–254 (QGQGHGA) each bind acetyl-CoA. The Proton donor/acceptor role is filled by glutamate 276. Serine 343 is subject to Phosphoserine.

This sequence belongs to the HAT1 family. As to quaternary structure, catalytic subunit of the type B histone acetyltransferase (HAT) complex, composed of RBBP7 and HAT1. Interacts with histones H4 and H2A. The interaction is dependent of the ability of RBBP7 to bind to the N-terminus of histones. Component of the histone H3.1 and H3.3 complexes. In terms of processing, phosphorylated by AMPK at Ser-190; phosphorylation increases HAT1 activity.

Its subcellular location is the nucleus matrix. It localises to the mitochondrion. The protein resides in the cytoplasm. The protein localises to the nucleus. It is found in the nucleoplasm. The catalysed reaction is L-lysyl-[protein] + acetyl-CoA = N(6)-acetyl-L-lysyl-[protein] + CoA + H(+). Its function is as follows. Histone acetyltransferase that plays a role in different biological processes including cell cycle progression, glucose metabolism, histone production or DNA damage repair. Coordinates histone production and acetylation via H4 promoter binding. Acetylates histone H4 at 'Lys-5' (H4K5ac) and 'Lys-12' (H4K12ac) and, to a lesser extent, histone H2A at 'Lys-5' (H2AK5ac). Drives H4 production by chromatin binding to support chromatin replication and acetylation. Since transcription of H4 genes is tightly coupled to S-phase, plays an important role in S-phase entry and progression. Promotes homologous recombination in DNA repair by facilitating histone turnover and incorporation of acetylated H3.3 at sites of double-strand breaks. In addition, acetylates other substrates such as chromatin-related proteins. Also acetylates RSAD2 which mediates the interaction of ubiquitin ligase UBE4A with RSAD2 leading to RSAD2 ubiquitination and subsequent degradation. In terms of biological role, (Microbial infection) Contributes to hepatitis B virus (HBV) replication by acetylating histone H4 at the sites of 'Lys-5' and 'Lys-12' on the covalently closed circular DNA (cccDNA) minichromosome leading to its accumulation within the host cell. This chain is Histone acetyltransferase type B catalytic subunit (HAT1), found in Homo sapiens (Human).